Here is a 1068-residue protein sequence, read N- to C-terminus: Sucrose-phosphate synthase (1068 aa).

2 disordered regions span residues 18–47 and 118–139; these read HTSS…GAHM and KEQE…SEGE. The segment covering 23–32 has biased composition (gly residues); the sequence is GAGGGGGGGD. Positions 118–128 are enriched in basic and acidic residues; the sequence is KEQEQVRREAT.

The protein belongs to the glycosyltransferase 1 family. As to quaternary structure, homodimer or homotetramer.

It carries out the reaction beta-D-fructose 6-phosphate + UDP-alpha-D-glucose = sucrose 6(F)-phosphate + UDP + H(+). It participates in glycan biosynthesis; sucrose biosynthesis; sucrose from D-fructose 6-phosphate and UDP-alpha-D-glucose: step 1/2. Activity is regulated by phosphorylation and moderated by concentration of metabolites and light. Plays a role in photosynthetic sucrose synthesis by catalyzing the rate-limiting step of sucrose biosynthesis from UDP-glucose and fructose- 6-phosphate. Involved in the regulation of carbon partitioning in the leaves of plants. May regulate the synthesis of sucrose and therefore play a major role as a limiting factor in the export of photoassimilates out of the leaf. Plays a role for sucrose availability that is essential for plant growth and fiber elongation. The polypeptide is Sucrose-phosphate synthase (Zea mays (Maize)).